The chain runs to 434 residues: MSDTSFVRTEMLAPRPAPVSQVGAIKWMRENLFSGPLNTALTVFGLLATVWLVQAAAPWLLHGVWNANSLTECRAIIAERWGPEATGACWAVIRVRWNQFLFGFYPVDQYWRLFVTFAGLFLALAPVLFDALPRKLIWGTLLYPLAAFWLLWGGPIWGPVSVLAGFAILGLLFTALAPKLGVPVSAGIGLVVAALFWLYAAAPIEAALQSALPLALPEVDSDQFGGFLLALVIGVTAIVVSLPLGILLALGRQSDMLIVKSLSVGIIEFVRGVPLITLLFTASLLLQYFLPPGTNFDLILRVVILVTLFAAAYIAEVIRGGLAALPRGQYEAADALGLDYWQAQRLIIMPQALKISIPGIVSSFIGLFKDTTLVAFVGLFDPLKGISNVVRSDMAWKGTYWEPYIFVALIFFLFNFSMSRYSMYLERKLKRDHR.

Transmembrane regions (helical) follow at residues 41–61 (LTVF…PWLL), 113–133 (LFVT…DALP), 135–155 (KLIW…WGGP), 156–176 (IWGP…FTAL), 180–200 (LGVP…WLYA), 227–247 (FLLA…LGIL), 272–292 (GVPL…FLPP), 298–318 (LILR…AEVI), 360–380 (IVSS…VGLF), and 398–418 (GTYW…NFSM). Positions 227–422 (FLLALVIGVT…LFNFSMSRYS (196 aa)) constitute an ABC transmembrane type-1 domain.

This sequence belongs to the binding-protein-dependent transport system permease family. HisMQ subfamily. BztB and BztC form a heterodimer which can form a membrane complex with a homodimer of BztD.

The protein localises to the cell inner membrane. Functionally, part of a binding-protein-dependent transport system for glutamate, glutamine, aspartate and asparagine. Probably responsible for the translocation of the substrate across the membrane. The chain is Glutamate/glutamine/aspartate/asparagine transport system permease protein BztC (bztC) from Rhodobacter capsulatus (strain ATCC BAA-309 / NBRC 16581 / SB1003).